We begin with the raw amino-acid sequence, 440 residues long: ATP-dependent protease ATPase subunit HslU (440 aa).

ATP-binding positions include Ile18, 60–65 (GVGKTE), Asp252, Glu318, and Arg390.

Belongs to the ClpX chaperone family. HslU subfamily. As to quaternary structure, a double ring-shaped homohexamer of HslV is capped on each side by a ring-shaped HslU homohexamer. The assembly of the HslU/HslV complex is dependent on binding of ATP.

Its subcellular location is the cytoplasm. Its function is as follows. ATPase subunit of a proteasome-like degradation complex; this subunit has chaperone activity. The binding of ATP and its subsequent hydrolysis by HslU are essential for unfolding of protein substrates subsequently hydrolyzed by HslV. HslU recognizes the N-terminal part of its protein substrates and unfolds these before they are guided to HslV for hydrolysis. The polypeptide is ATP-dependent protease ATPase subunit HslU (Acidithiobacillus ferrooxidans (strain ATCC 23270 / DSM 14882 / CIP 104768 / NCIMB 8455) (Ferrobacillus ferrooxidans (strain ATCC 23270))).